The primary structure comprises 1360 residues: TRAF2 and NCK-interacting protein kinase (1360 aa).

One can recognise a Protein kinase domain in the interval 25–289 (FELVELVGNG…TEQLMKHPFI (265 aa)). ATP contacts are provided by residues 31–39 (VGNGTYGQV) and lysine 54. Aspartate 153 functions as the Proton acceptor in the catalytic mechanism. Position 187 is a phosphothreonine (threonine 187). Disordered stretches follow at residues 284 to 347 (MKHP…LPGE), 398 to 440 (QKEQ…RRRA), and 539 to 589 (ERSR…RPVD). Basic and acidic residues predominate over residues 288 to 307 (FIRDQPNERQVRIQLKDHID). The interval 290–1047 (RDQPNERQVR…EIRKYKKRFN (758 aa)) is mediates interaction with NEDD4. A compositionally biased stretch (acidic residues) spans 317 to 335 (DETEYEYSGSEEEEEENDS). Serine 324 and serine 326 each carry phosphoserine. Residues serine 560 and serine 570 each carry the phosphoserine modification. Threonine 581 is subject to Phosphothreonine. Phosphoserine is present on residues serine 600, serine 608, serine 610, and serine 640. Disordered stretches follow at residues 601–801 (QGPA…KAID), 814–878 (LRIE…YNVG), 908–927 (TSGE…AGHI), and 933–998 (VQQS…ESSA). Over residues 652–669 (RIEKFDRSSWLRQEEDIP) the composition is skewed to basic and acidic residues. Residues serine 678, serine 680, serine 688, serine 701, serine 707, serine 720, serine 764, serine 766, and serine 769 each carry the phosphoserine modification. Positions 720–755 (SPLQRTSSGSSSSSSTPSSQPSSQGGSQPGSQAGSS) are enriched in low complexity. Composition is skewed to basic and acidic residues over residues 775 to 789 (EPAK…DITR) and 814 to 827 (LRIE…KKVT). Over residues 834 to 847 (EESESSEEEEEDGE) the composition is skewed to acidic residues. Basic and acidic residues predominate over residues 908–917 (TSGEKKRSGH). Serine 959 carries the post-translational modification Phosphoserine. The span at 987-996 (TDEDEEDEES) shows a compositional bias: acidic residues. Positions 1047–1334 (NSEILCAALW…KFLCERNDKV (288 aa)) constitute a CNH domain.

It belongs to the protein kinase superfamily. STE Ser/Thr protein kinase family. STE20 subfamily. As to quaternary structure, interacts (via the CNH domain) with RAP2A (GTP-bound form preferentially); the interaction is direct and required for the activation of TNIK by RAP2A. Interacts with NEDD4; recruits RAP2A to NEDD4. Interacts with TRAF2 and NCK. Interacts with TCF7L2/TCF4 and CTNNB1; the interaction is direct. Interacts with TANC1. Post-translationally, autophosphorylated. Autophosphorylation is activated by RAP2A and induces association to the cytoskeletal fraction. In terms of tissue distribution, expressed ubiquitously. Highest levels observed in heart, brain and skeletal muscle. Expressed in normal colonic epithelia and colorectal cancer tissues.

It is found in the nucleus. The protein resides in the cytoplasm. It localises to the recycling endosome. The protein localises to the cytoskeleton. The enzyme catalyses L-seryl-[protein] + ATP = O-phospho-L-seryl-[protein] + ADP + H(+). It catalyses the reaction L-threonyl-[protein] + ATP = O-phospho-L-threonyl-[protein] + ADP + H(+). In terms of biological role, serine/threonine kinase that acts as an essential activator of the Wnt signaling pathway. Recruited to promoters of Wnt target genes and required to activate their expression. May act by phosphorylating TCF4/TCF7L2. Appears to act upstream of the JUN N-terminal pathway. May play a role in the response to environmental stress. Part of a signaling complex composed of NEDD4, RAP2A and TNIK which regulates neuronal dendrite extension and arborization during development. More generally, it may play a role in cytoskeletal rearrangements and regulate cell spreading. Phosphorylates SMAD1 on Thr-322. Activator of the Hippo signaling pathway which plays a pivotal role in organ size control and tumor suppression by restricting proliferation and promoting apoptosis. MAP4Ks act in parallel to and are partially redundant with STK3/MST2 and STK4/MST2 in the phosphorylation and activation of LATS1/2, and establish MAP4Ks as components of the expanded Hippo pathway. The polypeptide is TRAF2 and NCK-interacting protein kinase (Homo sapiens (Human)).